The sequence spans 175 residues: Protein FAM89A (175 aa).

Residues 141 to 175 form a disordered region; sequence FQEQGSLQDGQHHGSPRDQSPLTHLSSSDWILESI. Positions 157-169 are enriched in polar residues; that stretch reads RDQSPLTHLSSSD.

This sequence belongs to the FAM89 family.

The polypeptide is Protein FAM89A (Fam89a) (Mus musculus (Mouse)).